We begin with the raw amino-acid sequence, 310 residues long: Thioredoxin reductase (310 aa).

FAD is bound at residue 34–41 (NGMQPGGQ). Residues cysteine 135 and cysteine 138 are joined by a disulfide bond. 281–290 (DVQDKIYRQA) provides a ligand contact to FAD.

The protein belongs to the class-II pyridine nucleotide-disulfide oxidoreductase family. In terms of assembly, homodimer. FAD serves as cofactor.

The protein resides in the cytoplasm. The catalysed reaction is [thioredoxin]-dithiol + NADP(+) = [thioredoxin]-disulfide + NADPH + H(+). The protein is Thioredoxin reductase (trxB) of Rickettsia prowazekii (strain Madrid E).